We begin with the raw amino-acid sequence, 483 residues long: CBL-interacting serine/threonine-protein kinase 19 (483 aa).

The Protein kinase domain maps to 28-282 (YEMGRLLGHG…MPDIMETSWF (255 aa)). ATP-binding positions include 34 to 42 (LGHGTFAKV) and K57. D150 functions as the Proton acceptor in the catalytic mechanism. Residues 168 to 197 (DFGLSAVSDQIRQDGLFHTFCGTPAYVAPE) are activation loop. S172 bears the Phosphoserine mark. The residue at position 186 (T186) is a Phosphothreonine. A compositionally biased stretch (polar residues) spans 313–322 (SVSGRSSTVS). The tract at residues 313–338 (SVSGRSSTVSEPEDFESFDGRRRGGS) is disordered. Residues 340 to 364 (PRPASLNAFDLISFSPGFDLSGLFE) enclose the NAF domain. A PPI region spans residues 367-396 (GEGSRFVSGAPVGQIISKLEEIARIVSFTV). Residues 459–483 (NLSSENGQRVSGSRSLPSFLLSDTD) form a disordered region.

Belongs to the protein kinase superfamily. CAMK Ser/Thr protein kinase family. SNF1 subfamily. Requires Mn(2+) as cofactor.

It carries out the reaction L-seryl-[protein] + ATP = O-phospho-L-seryl-[protein] + ADP + H(+). The enzyme catalyses L-threonyl-[protein] + ATP = O-phospho-L-threonyl-[protein] + ADP + H(+). In terms of biological role, CIPK serine-threonine protein kinases interact with CBL proteins. Binding of a CBL protein to the regulatory NAF domain of CIPK protein lead to the activation of the kinase in a calcium-dependent manner. This Arabidopsis thaliana (Mouse-ear cress) protein is CBL-interacting serine/threonine-protein kinase 19 (CIPK19).